Consider the following 48-residue polypeptide: Thiamine thiazole synthase, chloroplastic (48 aa).

Residues alanine 18 and valine 40 each contribute to the substrate site.

The protein belongs to the THI4 family. As to quaternary structure, homooctamer. Fe cation is required as a cofactor.

It localises to the plastid. The protein resides in the chloroplast. It catalyses the reaction [ADP-thiazole synthase]-L-cysteine + glycine + NAD(+) = [ADP-thiazole synthase]-dehydroalanine + ADP-5-ethyl-4-methylthiazole-2-carboxylate + nicotinamide + 3 H2O + 2 H(+). Involved in biosynthesis of the thiamine precursor thiazole. Catalyzes the conversion of NAD and glycine to adenosine diphosphate 5-(2-hydroxyethyl)-4-methylthiazole-2-carboxylic acid (ADT), an adenylated thiazole intermediate. The reaction includes an iron-dependent sulfide transfer from a conserved cysteine residue of the protein to a thiazole intermediate. The enzyme can only undergo a single turnover, which suggests it is a suicide enzyme. May have additional roles in adaptation to various stress conditions and in DNA damage tolerance. The chain is Thiamine thiazole synthase, chloroplastic (THI1) from Populus euphratica (Euphrates poplar).